A 265-amino-acid polypeptide reads, in one-letter code: DNA repair protein RecO (265 aa).

Belongs to the RecO family.

Functionally, involved in DNA repair and RecF pathway recombination. The sequence is that of DNA repair protein RecO from Mycobacterium ulcerans (strain Agy99).